The chain runs to 333 residues: MKNLRNRSFLTLLDFSRQEVEFLLTLSEDLKRAKYIGTEKPMLKNKNIALLFEKDSTRTRCAFEVAAHDQGANVTYLGPTGSQMGKKETTKDTARVLGGMYDGIEYRGFSQRTVETLAEYSGVPVWNGLTDEDHPTQVLADFLTAKEVLKKDYADINFTYVGDGRNNVANALMQGAAIMGMNFHLVCPKELNPTDELLNRCKNIAAENGGNILITDDIDQGVKGSDVIYTDVWVSMGEPDEVWKERLELLKPYQVNKEMMDKTGNPNVIFEHCLPSFHNADTKIGQQIFEKYGIREMEVTDEVFESKASVVFQEAENRMHTIKAVMVATLGEF.

Carbamoyl phosphate-binding positions include 56-59 (STRT), Gln83, Arg107, and 134-137 (HPTQ). Residues Asn167, Asp231, and 235 to 236 (SM) each bind L-ornithine. Carbamoyl phosphate-binding positions include 273 to 274 (CL) and Arg318.

The protein belongs to the aspartate/ornithine carbamoyltransferase superfamily. OTCase family.

It is found in the cytoplasm. The catalysed reaction is carbamoyl phosphate + L-ornithine = L-citrulline + phosphate + H(+). It participates in amino-acid biosynthesis; L-arginine biosynthesis; L-arginine from L-ornithine and carbamoyl phosphate: step 1/3. Its function is as follows. Reversibly catalyzes the transfer of the carbamoyl group from carbamoyl phosphate (CP) to the N(epsilon) atom of ornithine (ORN) to produce L-citrulline. In Staphylococcus aureus (strain Mu50 / ATCC 700699), this protein is Ornithine carbamoyltransferase (argF).